We begin with the raw amino-acid sequence, 347 residues long: Probable dual-specificity RNA methyltransferase RlmN (347 aa).

E91 functions as the Proton acceptor in the catalytic mechanism. In terms of domain architecture, Radical SAM core spans 97–327; that stretch reads YKYGNSICVS…ATVRREMGSD (231 aa). A disulfide bridge links C104 with C332. [4Fe-4S] cluster contacts are provided by C111, C115, and C118. S-adenosyl-L-methionine contacts are provided by residues 158 to 159, S190, 213 to 215, and N289; these read GE and SLH. C332 (S-methylcysteine intermediate) is an active-site residue.

It belongs to the radical SAM superfamily. RlmN family. [4Fe-4S] cluster is required as a cofactor.

It localises to the cytoplasm. The catalysed reaction is adenosine(2503) in 23S rRNA + 2 reduced [2Fe-2S]-[ferredoxin] + 2 S-adenosyl-L-methionine = 2-methyladenosine(2503) in 23S rRNA + 5'-deoxyadenosine + L-methionine + 2 oxidized [2Fe-2S]-[ferredoxin] + S-adenosyl-L-homocysteine. The enzyme catalyses adenosine(37) in tRNA + 2 reduced [2Fe-2S]-[ferredoxin] + 2 S-adenosyl-L-methionine = 2-methyladenosine(37) in tRNA + 5'-deoxyadenosine + L-methionine + 2 oxidized [2Fe-2S]-[ferredoxin] + S-adenosyl-L-homocysteine. Functionally, specifically methylates position 2 of adenine 2503 in 23S rRNA and position 2 of adenine 37 in tRNAs. This Clostridium perfringens (strain 13 / Type A) protein is Probable dual-specificity RNA methyltransferase RlmN.